We begin with the raw amino-acid sequence, 68 residues long: Tabimmunregulin 12 (68 aa).

A signal peptide spans 1–24 (MLFKSYVYFLAGLLLVGLFTSCDA). The propeptide occupies 25 to 38 (DAQYEELVPGFFRK).

In terms of tissue distribution, expressed in salivary glands.

The protein localises to the secreted. Functionally, horsefly salivary gland immunosuppressant protein that likely inhibits the host inflammatory response by regulation of anti- and pro-inflammatory cytokines. When tested on mouse splenocytes in the presence of LPS, it increases the secretion of the proinflammatory cytokine interleukin-10 (IL10) and decreases the secretion of the proinflammatory cytokine interferon-gamma (IFNG) in a dose-dependent manner. This Tabanus yao (Horsefly) protein is Tabimmunregulin 12.